The primary structure comprises 476 residues: Bifunctional protein HldE (476 aa).

The tract at residues 1–319 (MKVSLPAFEK…EALALHHGES (319 aa)) is ribokinase. ATP is bound at residue 195 to 198 (NMSE). Asp-264 is an active-site residue. The interval 345 to 476 (MTNGCFDILH…AIIQNIMANQ (132 aa)) is cytidylyltransferase.

It in the N-terminal section; belongs to the carbohydrate kinase PfkB family. This sequence in the C-terminal section; belongs to the cytidylyltransferase family. As to quaternary structure, homodimer.

It carries out the reaction D-glycero-beta-D-manno-heptose 7-phosphate + ATP = D-glycero-beta-D-manno-heptose 1,7-bisphosphate + ADP + H(+). It catalyses the reaction D-glycero-beta-D-manno-heptose 1-phosphate + ATP + H(+) = ADP-D-glycero-beta-D-manno-heptose + diphosphate. It functions in the pathway nucleotide-sugar biosynthesis; ADP-L-glycero-beta-D-manno-heptose biosynthesis; ADP-L-glycero-beta-D-manno-heptose from D-glycero-beta-D-manno-heptose 7-phosphate: step 1/4. Its pathway is nucleotide-sugar biosynthesis; ADP-L-glycero-beta-D-manno-heptose biosynthesis; ADP-L-glycero-beta-D-manno-heptose from D-glycero-beta-D-manno-heptose 7-phosphate: step 3/4. Its function is as follows. Catalyzes the phosphorylation of D-glycero-D-manno-heptose 7-phosphate at the C-1 position to selectively form D-glycero-beta-D-manno-heptose-1,7-bisphosphate. In terms of biological role, catalyzes the ADP transfer from ATP to D-glycero-beta-D-manno-heptose 1-phosphate, yielding ADP-D-glycero-beta-D-manno-heptose. In Shewanella putrefaciens (strain CN-32 / ATCC BAA-453), this protein is Bifunctional protein HldE.